The following is a 133-amino-acid chain: Large ribosomal subunit protein bL17 (133 aa).

The protein belongs to the bacterial ribosomal protein bL17 family. Part of the 50S ribosomal subunit. Contacts protein L32.

In Idiomarina loihiensis (strain ATCC BAA-735 / DSM 15497 / L2-TR), this protein is Large ribosomal subunit protein bL17.